A 208-amino-acid chain; its full sequence is Guanylate kinase (208 aa).

The Guanylate kinase-like domain maps to 3–181 (GSLFIITAAS…ALTELKAIIV (179 aa)). 10–17 (AASGTGKT) contacts ATP.

This sequence belongs to the guanylate kinase family.

It is found in the cytoplasm. The enzyme catalyses GMP + ATP = GDP + ADP. Essential for recycling GMP and indirectly, cGMP. The chain is Guanylate kinase from Psychrobacter arcticus (strain DSM 17307 / VKM B-2377 / 273-4).